Consider the following 592-residue polypeptide: MAAQGRIVWVSGPAVRADGMSEAKMYETVTVGDSKLVGEVIRLTGDVAFIQVYESTSGLKPGEPVIGTGNPLSVLLGPGIIGQLYDGIQRPLRALSEASGSFIGRGITTTPVDMAKKYHFVPSVSNGDEVAAGNVIGVVQETDLIEHSIMVPPDHKGGKISNLVSEGDYDLETVLATTEGEGETVELKMYHRWPVRKPRPYKNRYDPTVPLLTGQRVIDTFFPIAKGGTGSIPGAFGTGKTVTLHQIAKWADSQVVVYIGCGERGNEMTEVLVEFPHLKDPRSGKPLMDRTVLVANTSNMPVAAREASIYTGVTIAEYYRDMGKDVVLVADSTSRWAEALREMSGRLEEMPAEEGYPSYLASRLAEFYERAGRVRAAGSPDRDGSVTLIGAVSPSGGDFTEPVTTHTMRFIKTFWALDAKLAYSRHYPSINWMNSYSGYLADIAKWWGENINEDWLSLRSEVYGVLQREDTLKEIVRLLGPEALPDEEKLILEVARMVKIGLLQQNSFDDVDTYCSPEKQYKLMKLLVDFYKKGQQAIKEGTPLADIRAMKSITTLLKARMDVKDDEMPKLDQLDADMQEEFKSITGVKVSN.

An ATP-binding site is contributed by 234–241 (GAFGTGKT).

Belongs to the ATPase alpha/beta chains family. In terms of assembly, has multiple subunits with at least A(3), B(3), C, D, E, F, H, I and proteolipid K(x).

It localises to the cell membrane. The catalysed reaction is ATP + H2O + 4 H(+)(in) = ADP + phosphate + 5 H(+)(out). Its function is as follows. Component of the A-type ATP synthase that produces ATP from ADP in the presence of a proton gradient across the membrane. The A chain is the catalytic subunit. The chain is A-type ATP synthase subunit A from Nitrosopumilus maritimus (strain SCM1).